A 270-amino-acid chain; its full sequence is S-adenosylmethionine decarboxylase proenzyme (270 aa).

Catalysis depends on Ser120, which acts as the Schiff-base intermediate with substrate; via pyruvic acid. Pyruvic acid (Ser); by autocatalysis is present on Ser120. The Proton acceptor; for processing activity role is filled by His125. The active-site Proton donor; for catalytic activity is Cys148.

The protein belongs to the prokaryotic AdoMetDC family. Type 2 subfamily. As to quaternary structure, heterooctamer of four alpha and four beta chains arranged as a tetramer of alpha/beta heterodimers. It depends on pyruvate as a cofactor. Is synthesized initially as an inactive proenzyme. Formation of the active enzyme involves a self-maturation process in which the active site pyruvoyl group is generated from an internal serine residue via an autocatalytic post-translational modification. Two non-identical subunits are generated from the proenzyme in this reaction, and the pyruvate is formed at the N-terminus of the alpha chain, which is derived from the carboxyl end of the proenzyme. The post-translation cleavage follows an unusual pathway, termed non-hydrolytic serinolysis, in which the side chain hydroxyl group of the serine supplies its oxygen atom to form the C-terminus of the beta chain, while the remainder of the serine residue undergoes an oxidative deamination to produce ammonia and the pyruvoyl group blocking the N-terminus of the alpha chain.

It catalyses the reaction S-adenosyl-L-methionine + H(+) = S-adenosyl 3-(methylsulfanyl)propylamine + CO2. Its pathway is amine and polyamine biosynthesis; S-adenosylmethioninamine biosynthesis; S-adenosylmethioninamine from S-adenosyl-L-methionine: step 1/1. Its function is as follows. Catalyzes the decarboxylation of S-adenosylmethionine to S-adenosylmethioninamine (dcAdoMet), the propylamine donor required for the synthesis of the polyamines spermine and spermidine from the diamine putrescine. The protein is S-adenosylmethionine decarboxylase proenzyme of Alkaliphilus oremlandii (strain OhILAs) (Clostridium oremlandii (strain OhILAs)).